The primary structure comprises 302 residues: N-acetyl-D-glucosamine kinase (302 aa).

Residues 4–11 (GFDVGGTK) and 133–140 (GFGGGLVY) each bind ATP. 4 residues coordinate Zn(2+): His157, Cys177, Cys179, and Cys184.

It belongs to the ROK (NagC/XylR) family. NagK subfamily.

The enzyme catalyses N-acetyl-D-glucosamine + ATP = N-acetyl-D-glucosamine 6-phosphate + ADP + H(+). The protein operates within cell wall biogenesis; peptidoglycan recycling. Functionally, catalyzes the phosphorylation of N-acetyl-D-glucosamine (GlcNAc) derived from cell-wall degradation, yielding GlcNAc-6-P. This chain is N-acetyl-D-glucosamine kinase, found in Vibrio cholerae serotype O1 (strain ATCC 39315 / El Tor Inaba N16961).